A 42-amino-acid chain; its full sequence is ALTLLTVSDSLITKESLSSLERQTTFNTMVKLALEMACELQK.

8–9 (SD) contributes to the a purine D-ribonucleoside binding site. Aspartate 9 functions as the Proton donor in the catalytic mechanism.

The protein belongs to the PNP/UDP phosphorylase family. In terms of assembly, homohexamer; trimer of homodimers.

The catalysed reaction is a purine D-ribonucleoside + phosphate = a purine nucleobase + alpha-D-ribose 1-phosphate. The enzyme catalyses a purine 2'-deoxy-D-ribonucleoside + phosphate = a purine nucleobase + 2-deoxy-alpha-D-ribose 1-phosphate. In terms of biological role, catalyzes the reversible phosphorolytic breakdown of the N-glycosidic bond in the beta-(deoxy)ribonucleoside molecules, with the formation of the corresponding free purine bases and pentose-1-phosphate. In Mycoplasmoides pirum (Mycoplasma pirum), this protein is Purine nucleoside phosphorylase DeoD-type.